The following is a 473-amino-acid chain: Mitochondrial distribution and morphology protein 10 (473 aa).

It belongs to the MDM10 family. As to quaternary structure, component of the ER-mitochondria encounter structure (ERMES) or MDM complex, composed of MMM1, MDM10, MDM12 and MDM34. Associates with the mitochondrial outer membrane sorting assembly machinery SAM(core) complex.

Its subcellular location is the mitochondrion outer membrane. In terms of biological role, component of the ERMES/MDM complex, which serves as a molecular tether to connect the endoplasmic reticulum and mitochondria. Components of this complex are involved in the control of mitochondrial shape and protein biogenesis and may function in phospholipid exchange. MDM10 is involved in the late assembly steps of the general translocase of the mitochondrial outer membrane (TOM complex). Functions in the TOM40-specific route of the assembly of outer membrane beta-barrel proteins, including the association of TOM40 with the receptor TOM22 and small TOM proteins. Can associate with the SAM(core) complex as well as the MDM12-MMM1 complex, both involved in late steps of the major beta-barrel assembly pathway, that is responsible for biogenesis of all outer membrane beta-barrel proteins. May act as a switch that shuttles between both complexes and channels precursor proteins into the TOM40-specific pathway. Plays a role in mitochondrial morphology and in the inheritance of mitochondria. The sequence is that of Mitochondrial distribution and morphology protein 10 from Candida albicans (strain WO-1) (Yeast).